The chain runs to 225 residues: UPF0758 protein Spea_3837 (225 aa).

The 123-residue stretch at 102–224 (ILSDPDLTRD…IVSFAERGWI (123 aa)) folds into the MPN domain. Residues histidine 173, histidine 175, and aspartate 186 each coordinate Zn(2+). Residues 173 to 186 (HNHPSGIAEPSTAD) carry the JAMM motif motif.

This sequence belongs to the UPF0758 family.

This chain is UPF0758 protein Spea_3837, found in Shewanella pealeana (strain ATCC 700345 / ANG-SQ1).